Reading from the N-terminus, the 271-residue chain is Probable iron transport system membrane protein HI_0359 (271 aa).

The next 8 membrane-spanning stretches (helical) occupy residues 17 to 37 (ALLT…YLVL), 55 to 75 (IVLA…SGIF), 93 to 113 (TAMG…FTKI), 131 to 151 (SHQE…LIVF), 168 to 188 (VAGL…ALTI), 194 to 214 (VVGV…ALTL), 221 to 241 (MLWV…ILSY), and 245 to 265 (ASTG…ALAY).

Belongs to the ABC-3 integral membrane protein family.

It localises to the cell inner membrane. In terms of biological role, part of an ATP-driven transport system HI_0359/HI_0360/HI_0361/HI_0362 for iron. The sequence is that of Probable iron transport system membrane protein HI_0359 from Haemophilus influenzae (strain ATCC 51907 / DSM 11121 / KW20 / Rd).